Consider the following 362-residue polypeptide: CLIP domain-containing serine protease B10 (362 aa).

An N-terminal signal peptide occupies residues 1–19 (MAKVVDCVLLLAFIAVVRG). In terms of domain architecture, Clip spans 22–75 (ACRTPDHRDGVCHPVQQCPSVRDEFFNSDRVLSEDEIDYLRKLQCKTKDVTICC). Intrachain disulfides connect C23–C74, C33–C66, and C39–C75. The Peptidase S1 domain maps to 110–361 (IIGGNYTAID…YLDWIRQNIR (252 aa)). A glycan (N-linked (GlcNAc...) asparagine) is linked at N114. An intrachain disulfide couples C140 to C156. Residues H155 and D220 each act as charge relay system in the active site. A glycan (N-linked (GlcNAc...) asparagine) is linked at N254. 2 disulfides stabilise this stretch: C285–C300 and C310–C337. S314 (charge relay system) is an active-site residue.

The protein belongs to the peptidase S1 family. CLIP subfamily. In terms of assembly, forms a covalent heterodimer with SRPN2; the interaction inhibits CLIPB10 catalytic activity. Post-translationally, cleaved by an unknown protease into an active form.

The protein resides in the secreted. Its activity is regulated as follows. Inhibited by serpin SRPN2. In terms of biological role, serine protease which preferentially cleaves after arginine residues. Involved in the innate immune response against parasite P.bergei infection by activating the melanization cascade. Probably in the hemolymph, cleaves and activates prophenoloxidase (PPO), which functions in the formation of pigments such as melanin and other polyphenolic compounds. In the susceptible strain G3, appears to be dispensable for ookinete elimination which occurs by lysis. The protein is CLIP domain-containing serine protease B10 of Anopheles gambiae (African malaria mosquito).